Here is a 385-residue protein sequence, read N- to C-terminus: Polyketide synthase 3 (385 aa).

Cys-157 is a catalytic residue.

This sequence belongs to the thiolase-like superfamily. Chalcone/stilbene synthases family. In terms of tissue distribution, expressed in male and female flowers, and seedlings.

It is found in the cytoplasm. Polyketide synthase responsible for the biosynthesis of secondary metabolites. The sequence is that of Polyketide synthase 3 (PKSF3) from Cannabis sativa (Hemp).